The primary structure comprises 252 residues: 5-oxoprolinase subunit A (252 aa).

Belongs to the LamB/PxpA family. In terms of assembly, forms a complex composed of PxpA, PxpB and PxpC.

It catalyses the reaction 5-oxo-L-proline + ATP + 2 H2O = L-glutamate + ADP + phosphate + H(+). Catalyzes the cleavage of 5-oxoproline to form L-glutamate coupled to the hydrolysis of ATP to ADP and inorganic phosphate. The chain is 5-oxoprolinase subunit A from Corynebacterium glutamicum (strain ATCC 13032 / DSM 20300 / JCM 1318 / BCRC 11384 / CCUG 27702 / LMG 3730 / NBRC 12168 / NCIMB 10025 / NRRL B-2784 / 534).